The sequence spans 375 residues: Venom allergen 5 (375 aa).

Residues 1–26 form the signal peptide; the sequence is MSAPVGIPSLLLALCALLCVLNAVRS. The 145-residue stretch at 66–210 folds into the SCP domain; the sequence is VRLHNNLRSK…RRYTQIVCNY (145 aa). 2 N-linked (GlcNAc...) asparagine glycosylation sites follow: N300 and N366.

The protein belongs to the CRISP family. Venom allergen 5-like subfamily. Post-translationally, contains 9 disulfide bonds. In terms of tissue distribution, expressed by the venom gland.

Its subcellular location is the secreted. The protein is Venom allergen 5 of Lycosa singoriensis (Wolf spider).